An 85-amino-acid polypeptide reads, in one-letter code: Large ribosomal subunit protein bL27 (85 aa).

Positions 1 to 21 (MAHKKAGGSTRNGRDSEGKRL) are disordered.

This sequence belongs to the bacterial ribosomal protein bL27 family.

This chain is Large ribosomal subunit protein bL27, found in Hamiltonella defensa subsp. Acyrthosiphon pisum (strain 5AT).